We begin with the raw amino-acid sequence, 113 residues long: uncharacterized protein (113 aa).

The SWIM-type zinc finger occupies 49–91 (FFVVVGKEEYVVEGGFCTCPDFLVNLKGKSPCAHIIAVEVAKI).

This is an uncharacterized protein from Archaeoglobus fulgidus (strain ATCC 49558 / DSM 4304 / JCM 9628 / NBRC 100126 / VC-16).